Consider the following 105-residue polypeptide: UPF0145 protein CPS_2458 (105 aa).

It belongs to the UPF0145 family.

The sequence is that of UPF0145 protein CPS_2458 from Colwellia psychrerythraea (strain 34H / ATCC BAA-681) (Vibrio psychroerythus).